The chain runs to 349 residues: S-adenosylmethionine:tRNA ribosyltransferase-isomerase (349 aa).

This sequence belongs to the QueA family. Monomer.

Its subcellular location is the cytoplasm. It catalyses the reaction 7-aminomethyl-7-carbaguanosine(34) in tRNA + S-adenosyl-L-methionine = epoxyqueuosine(34) in tRNA + adenine + L-methionine + 2 H(+). The protein operates within tRNA modification; tRNA-queuosine biosynthesis. Functionally, transfers and isomerizes the ribose moiety from AdoMet to the 7-aminomethyl group of 7-deazaguanine (preQ1-tRNA) to give epoxyqueuosine (oQ-tRNA). The polypeptide is S-adenosylmethionine:tRNA ribosyltransferase-isomerase (Pseudomonas putida (strain ATCC 700007 / DSM 6899 / JCM 31910 / BCRC 17059 / LMG 24140 / F1)).